The sequence spans 149 residues: Large ribosomal subunit protein bL9 (149 aa).

Belongs to the bacterial ribosomal protein bL9 family.

Binds to the 23S rRNA. In Proteus mirabilis (strain HI4320), this protein is Large ribosomal subunit protein bL9.